Consider the following 131-residue polypeptide: Small ribosomal subunit protein uS11 (131 aa).

This sequence belongs to the universal ribosomal protein uS11 family. As to quaternary structure, part of the 30S ribosomal subunit. Interacts with proteins S7 and S18. Binds to IF-3.

In terms of biological role, located on the platform of the 30S subunit, it bridges several disparate RNA helices of the 16S rRNA. Forms part of the Shine-Dalgarno cleft in the 70S ribosome. The sequence is that of Small ribosomal subunit protein uS11 from Natranaerobius thermophilus (strain ATCC BAA-1301 / DSM 18059 / JW/NM-WN-LF).